The sequence spans 98 residues: Integration host factor subunit alpha (98 aa).

The interval 51–71 is disordered; the sequence is NFDLRDKNERPGRNPKTGEDI. Residues 53–69 are compositionally biased toward basic and acidic residues; that stretch reads DLRDKNERPGRNPKTGE.

It belongs to the bacterial histone-like protein family. As to quaternary structure, heterodimer of an alpha and a beta chain.

Functionally, this protein is one of the two subunits of integration host factor, a specific DNA-binding protein that functions in genetic recombination as well as in transcriptional and translational control. In Vibrio parahaemolyticus serotype O3:K6 (strain RIMD 2210633), this protein is Integration host factor subunit alpha.